An 810-amino-acid chain; its full sequence is MKEAQSMFEIPRGALYPVPPLRDIVVFPHMIVPLFVGREKSVRALEDVMKDDKQILLVTQKNAAQDDPTPADIYSVGTVGTVLQLLKLPDGTVKVLVEGGQRASITKFAENEDFFQAHADLVEEKVGESQELEALGRAVVSQFEQYIKLNKKIPPEVLVSINQIEEPGKLADTVASHLALKIPEKQQLLECATVSERLERVYAFMEGEIGVLQVEKRIRNRVKRQMEKTQREYYLNEQLKAIQKELGETEDGRDESAELEEKINKTRFSKEARDKALAELKKLRSMSPMSAEATVVRNYLDWMLSIPWKKRTKVKKDLKLAQKILDADHYGLEKVKERILEYLRVQNRMNKVKGPIQSLVGPPGVGKTSLGKSIAKSTGRNFVRMSLGGVRDEAEVRGHRRTYIGSMPGKVIQGMKKAKSSNPLFLLDEIDKLGADWRGDPSSALLEVLDPEQNGTFNDHYLEVDYDLSDVMFVCTANTMRMPQPLLDRMEIIRVAGYTEDEKVEISKRHLIEKQVEANGLKKGEFAISDDALRDLIRYYTREAGVRSLEREIANLCRKAVKEILMKGSAGAKVSVTRRNLDKYAGVRRFHFGEAELEDLVGVTTGLAWTEVGGELLSIEAVSLPGKGRVTTTGKLGDVMKESVQAAESYVKSRATAFGIKPTLFEKRDIHVHVPEGATPKDGPSAGVAMITSIVSVLTGIAVRKDVAMTGEITLRGRVLPIGGLKEKLLAALRGGLKHVLIPKDNEKDLAEIPDNVKRGLEIIPVSTVDDVLKHALVREVEPIEWKEPEAVEPAVAKPQTDGGGEVLRH.

One can recognise a Lon N-terminal domain in the interval 16-209 (YPVPPLRDIV…RVYAFMEGEI (194 aa)). Residue 361–368 (GPPGVGKT) coordinates ATP. The region spanning 598–779 (EDLVGVTTGL…DDVLKHALVR (182 aa)) is the Lon proteolytic domain. Residues Ser-685 and Lys-728 contribute to the active site.

The protein belongs to the peptidase S16 family. In terms of assembly, homohexamer. Organized in a ring with a central cavity.

It localises to the cytoplasm. The catalysed reaction is Hydrolysis of proteins in presence of ATP.. Functionally, ATP-dependent serine protease that mediates the selective degradation of mutant and abnormal proteins as well as certain short-lived regulatory proteins. Required for cellular homeostasis and for survival from DNA damage and developmental changes induced by stress. Degrades polypeptides processively to yield small peptide fragments that are 5 to 10 amino acids long. Binds to DNA in a double-stranded, site-specific manner. Involved in iron uptake. This is Lon protease from Azospirillum brasilense.